We begin with the raw amino-acid sequence, 174 residues long: Transcription factor bHLH36 (174 aa).

Residues 1–53 (MEKMMHRETERQRRQEMASLYASLRSLLPLHFIKGKRSTSDQVNEAVNYIKYL) enclose the bHLH domain.

Homodimer. As to expression, expressed constitutively in roots, leaves, stems, and flowers.

It localises to the nucleus. This chain is Transcription factor bHLH36 (BHLH36), found in Arabidopsis thaliana (Mouse-ear cress).